A 626-amino-acid polypeptide reads, in one-letter code: (+)-3-carene synthase 1, chloroplastic (626 aa).

The N-terminal 45 residues, 1–45 (MSLISAVPLASSCVSKSLISSVREHKALRRAIATLQMSRPGKSVA), are a transit peptide targeting the chloroplast. Positions 377, 381, and 529 each coordinate Mg(2+). A DDXXD motif motif is present at residues 377-381 (DDMYD).

Belongs to the terpene synthase family. Tpsd subfamily. Requires Mg(2+) as cofactor. The cofactor is Mn(2+).

Its subcellular location is the plastid. It is found in the chloroplast. It carries out the reaction (2E)-geranyl diphosphate = (+)-car-3-ene + diphosphate. The catalysed reaction is (2E)-geranyl diphosphate = terpinolene + diphosphate. The protein operates within terpene metabolism; oleoresin biosynthesis. Its pathway is secondary metabolite biosynthesis; terpenoid biosynthesis. Functionally, monoterpene synthase (TPS) involved in the biosynthesis of monoterpene natural products included in conifer oleoresin secretions and volatile emissions; these compounds contribute to biotic and abiotic stress defense against herbivores and pathogens. Catalyzes the conversion of (2E)-geranyl diphosphate (GPP) to (+)-3-carene and, to a lower extent, to terpinolene. The polypeptide is (+)-3-carene synthase 1, chloroplastic (Pinus banksiana (Jack pine)).